Consider the following 137-residue polypeptide: Large ribosomal subunit protein bL17 (137 aa).

The protein belongs to the bacterial ribosomal protein bL17 family. As to quaternary structure, part of the 50S ribosomal subunit. Contacts protein L32.

The chain is Large ribosomal subunit protein bL17 from Bradyrhizobium sp. (strain BTAi1 / ATCC BAA-1182).